The following is a 490-amino-acid chain: Katanin p60 ATPase-containing subunit A-like 1 (490 aa).

Met1 bears the N-acetylmethionine mark. Positions 95-184 are disordered; that stretch reads DPAVWPPPVP…DGEMPKFDGA (90 aa). A compositionally biased stretch (basic and acidic residues) spans 116–127; the sequence is PNREVRPLRKEM. Residues 128–139 show a composition bias toward low complexity; that stretch reads AGVGARGPVGRA. Residues 143-169 are compositionally biased toward basic and acidic residues; the sequence is SKSEKPSTSRDKDCRARGRDDKGRKNM. Ser174 is modified (phosphoserine). Residue 248-255 participates in ATP binding; it reads GPPGTGKT.

Belongs to the AAA ATPase family. Katanin p60 subunit A1 subfamily. A-like 1 sub-subfamily. As to quaternary structure, interacts with KATNB1 and KATNBL1.

The protein localises to the cytoplasm. Its subcellular location is the cytoskeleton. It localises to the spindle pole. The protein resides in the spindle. The catalysed reaction is n ATP + n H2O + a microtubule = n ADP + n phosphate + (n+1) alpha/beta tubulin heterodimers.. Regulates microtubule dynamics in Sertoli cells, a process that is essential for spermiogenesis and male fertility. Severs microtubules in an ATP-dependent manner, promoting rapid reorganization of cellular microtubule arrays. Has microtubule-severing activity in vitro. In Papio anubis (Olive baboon), this protein is Katanin p60 ATPase-containing subunit A-like 1.